Reading from the N-terminus, the 550-residue chain is Glucose-6-phosphate isomerase 2 (550 aa).

Glu-357 (proton donor) is an active-site residue. Active-site residues include His-388 and Lys-514. The segment at 527–550 (DTGALGHDSSTNGLIRHYRERHGK) is disordered.

This sequence belongs to the GPI family.

It is found in the cytoplasm. The enzyme catalyses alpha-D-glucose 6-phosphate = beta-D-fructose 6-phosphate. It functions in the pathway carbohydrate biosynthesis; gluconeogenesis. It participates in carbohydrate degradation; glycolysis; D-glyceraldehyde 3-phosphate and glycerone phosphate from D-glucose: step 2/4. In terms of biological role, catalyzes the reversible isomerization of glucose-6-phosphate to fructose-6-phosphate. This Chromobacterium violaceum (strain ATCC 12472 / DSM 30191 / JCM 1249 / CCUG 213 / NBRC 12614 / NCIMB 9131 / NCTC 9757 / MK) protein is Glucose-6-phosphate isomerase 2.